A 569-amino-acid polypeptide reads, in one-letter code: Proline--tRNA ligase (569 aa).

Belongs to the class-II aminoacyl-tRNA synthetase family. ProS type 1 subfamily. In terms of assembly, homodimer.

It is found in the cytoplasm. The catalysed reaction is tRNA(Pro) + L-proline + ATP = L-prolyl-tRNA(Pro) + AMP + diphosphate. Its function is as follows. Catalyzes the attachment of proline to tRNA(Pro) in a two-step reaction: proline is first activated by ATP to form Pro-AMP and then transferred to the acceptor end of tRNA(Pro). As ProRS can inadvertently accommodate and process non-cognate amino acids such as alanine and cysteine, to avoid such errors it has two additional distinct editing activities against alanine. One activity is designated as 'pretransfer' editing and involves the tRNA(Pro)-independent hydrolysis of activated Ala-AMP. The other activity is designated 'posttransfer' editing and involves deacylation of mischarged Ala-tRNA(Pro). The misacylated Cys-tRNA(Pro) is not edited by ProRS. The sequence is that of Proline--tRNA ligase from Nitrosospira multiformis (strain ATCC 25196 / NCIMB 11849 / C 71).